The chain runs to 260 residues: Indole-3-glycerol phosphate synthase (260 aa).

Belongs to the TrpC family.

It catalyses the reaction 1-(2-carboxyphenylamino)-1-deoxy-D-ribulose 5-phosphate + H(+) = (1S,2R)-1-C-(indol-3-yl)glycerol 3-phosphate + CO2 + H2O. Its pathway is amino-acid biosynthesis; L-tryptophan biosynthesis; L-tryptophan from chorismate: step 4/5. The polypeptide is Indole-3-glycerol phosphate synthase (Lactiplantibacillus plantarum (strain ATCC BAA-793 / NCIMB 8826 / WCFS1) (Lactobacillus plantarum)).